A 446-amino-acid chain; its full sequence is Exodeoxyribonuclease 7 large subunit (446 aa).

Belongs to the XseA family. As to quaternary structure, heterooligomer composed of large and small subunits.

Its subcellular location is the cytoplasm. It carries out the reaction Exonucleolytic cleavage in either 5'- to 3'- or 3'- to 5'-direction to yield nucleoside 5'-phosphates.. Functionally, bidirectionally degrades single-stranded DNA into large acid-insoluble oligonucleotides, which are then degraded further into small acid-soluble oligonucleotides. This is Exodeoxyribonuclease 7 large subunit from Streptococcus equi subsp. zooepidemicus (strain MGCS10565).